The chain runs to 550 residues: CTP synthase (550 aa).

The tract at residues 1–277 (MNGSADAGPR…GRAVERALGL (277 aa)) is amidoligase domain. Ser23 contacts CTP. Position 23 (Ser23) interacts with UTP. Position 24–29 (24–29 (SLGKGI)) interacts with ATP. Tyr64 provides a ligand contact to L-glutamine. Asp81 is an ATP binding site. Positions 81 and 151 each coordinate Mg(2+). CTP is bound by residues 158-160 (DIE), 198-203 (KTKPTQ), and Lys234. UTP contacts are provided by residues 198 to 203 (KTKPTQ) and Lys234. Residue Val252 coordinates ATP. Residues 302–549 (KIAIAGKYVK…VEAALAYQER (248 aa)) enclose the Glutamine amidotransferase type-1 domain. Gly364 is a binding site for L-glutamine. The Nucleophile; for glutamine hydrolysis role is filled by Cys391. L-glutamine is bound by residues 392 to 395 (LGLQ), Glu415, and Arg472. Catalysis depends on residues His522 and Glu524.

It belongs to the CTP synthase family. In terms of assembly, homotetramer in the presence of UTP and ATP. Is in a protein concentration-dependent equilibrium between monomer, dimer, and tetramer in the absence of UTP and ATP.

The enzyme catalyses UTP + L-glutamine + ATP + H2O = CTP + L-glutamate + ADP + phosphate + 2 H(+). It carries out the reaction L-glutamine + H2O = L-glutamate + NH4(+). It catalyses the reaction UTP + NH4(+) + ATP = CTP + ADP + phosphate + 2 H(+). It functions in the pathway pyrimidine metabolism; CTP biosynthesis via de novo pathway; CTP from UDP: step 2/2. With respect to regulation, allosterically activated by GTP, when glutamine is the substrate. GTP has no effect on the reaction when ammonia is the substrate. The allosteric effector GTP functions by stabilizing the protein conformation that binds the tetrahedral intermediate(s) formed during glutamine hydrolysis. Inhibited by the product CTP, via allosteric rather than competitive inhibition. Its function is as follows. Catalyzes the ATP-dependent amination of UTP to CTP with either L-glutamine or ammonia as the source of nitrogen. Regulates intracellular CTP levels through interactions with the four ribonucleotide triphosphates. The sequence is that of CTP synthase from Thermus thermophilus (strain ATCC 27634 / DSM 579 / HB8).